Reading from the N-terminus, the 828-residue chain is Putative alpha-1,3-mannosyltransferase MNN12 (828 aa).

Residues 1 to 13 (MIEKLTIKRSRQK) are Cytoplasmic-facing. Residues 14 to 34 (VIAYSVIIIWLMIVNIWLLNN) form a helical membrane-spanning segment. At 35 to 828 (YHLNSSTLTR…YYGDVWVGME (794 aa)) the chain is on the lumenal side. A glycan (N-linked (GlcNAc...) asparagine) is linked at N38. A disordered region spans residues 80 to 104 (HQEEDVPNSQSTDNSLIKPTSPAKN). Residues 86 to 103 (PNSQSTDNSLIKPTSPAK) show a composition bias toward polar residues. N-linked (GlcNAc...) asparagine glycans are attached at residues N247, N437, and N591.

It belongs to the MNN1/MNT family.

The protein localises to the golgi apparatus membrane. It participates in protein modification; protein glycosylation. In terms of biological role, responsible for addition of the terminal mannose residues to the outer chain of core N-linked polysaccharides and to O-linked mannotriose. Implicated in late Golgi modifications. The protein is Putative alpha-1,3-mannosyltransferase MNN12 (MNN12) of Candida albicans (strain SC5314 / ATCC MYA-2876) (Yeast).